We begin with the raw amino-acid sequence, 531 residues long: Cytochrome c oxidase subunit 1 (531 aa).

The chain crosses the membrane as a helical span at residues 18 to 38; sequence ILYLIYGMVSAMVATGMSVII. Glutamate 41 and glycine 46 together coordinate Ca(2+). The next 6 helical transmembrane spans lie at 59 to 79, 103 to 123, 149 to 169, 185 to 205, 237 to 257, and 269 to 289; these read VLVT…ILIG, ISFW…LIET, AIFA…NFIV, PLFV…LPVL, LFYF…FGII, and IFGQ…GFLV. Position 64 (histidine 64) interacts with Fe(II)-heme a. Histidine 243 is a Cu cation binding site. Residues 243 to 247 constitute a cross-link (1'-histidyl-3'-tyrosine (His-Tyr)); that stretch reads HPEVY. Position 247 (tyrosine 247) interacts with O2. 2 residues coordinate Cu cation: histidine 292 and histidine 293. 2 helical membrane passes run 312–332 and 340–360; these read MVIA…LYGG and MLFA…GVML. Residues histidine 370 and aspartate 371 each contribute to the Mg(2+) site. Histidine 378 is a binding site for heme a3. Fe(II)-heme a is bound at residue histidine 380. Transmembrane regions (helical) follow at residues 385-405 and 414-434; these read MGAL…MFGL and VHYW…HFLG. Proline 443 is a Ca(2+) binding site. Residues 458–478 form a helical membrane-spanning segment; sequence WGSIMSVISVLIGLYSVLVQL.

Belongs to the heme-copper respiratory oxidase family. In terms of assembly, component of the cytochrome c oxidase (complex IV, CIV), a multisubunit enzyme composed of a catalytic core of 3 subunits and several supernumerary subunits. The complex exists as a monomer or a dimer and forms supercomplexes (SCs) in the inner mitochondrial membrane with ubiquinol-cytochrome c oxidoreductase (cytochrome b-c1 complex, complex III, CIII). The cofactor is heme. Cu cation is required as a cofactor.

Its subcellular location is the mitochondrion inner membrane. The catalysed reaction is 4 Fe(II)-[cytochrome c] + O2 + 8 H(+)(in) = 4 Fe(III)-[cytochrome c] + 2 H2O + 4 H(+)(out). It functions in the pathway energy metabolism; oxidative phosphorylation. In terms of biological role, component of the cytochrome c oxidase, the last enzyme in the mitochondrial electron transport chain which drives oxidative phosphorylation. The respiratory chain contains 3 multisubunit complexes succinate dehydrogenase (complex II, CII), ubiquinol-cytochrome c oxidoreductase (cytochrome b-c1 complex, complex III, CIII) and cytochrome c oxidase (complex IV, CIV), that cooperate to transfer electrons derived from NADH and succinate to molecular oxygen, creating an electrochemical gradient over the inner membrane that drives transmembrane transport and the ATP synthase. Cytochrome c oxidase is the component of the respiratory chain that catalyzes the reduction of oxygen to water. Electrons originating from reduced cytochrome c in the intermembrane space (IMS) are transferred via the dinuclear copper A center (CU(A)) of subunit 2 and heme A of subunit 1 to the active site in subunit 1, a binuclear center (BNC) formed by heme A3 and copper B (CU(B)). The BNC reduces molecular oxygen to 2 water molecules using 4 electrons from cytochrome c in the IMS and 4 protons from the mitochondrial matrix. This is Cytochrome c oxidase subunit 1 (COX1) from Candida albicans (strain SC5314 / ATCC MYA-2876) (Yeast).